A 121-amino-acid polypeptide reads, in one-letter code: Trypsin/alpha-amylase inhibitor CMX1/CMX3 (121 aa).

Positions 1–24 (MAFKHQLILSTAILLAVLAAASAS) are cleaved as a signal peptide.

The protein belongs to the protease inhibitor I6 (cereal trypsin/alpha-amylase inhibitor) family.

It is found in the secreted. The sequence is that of Trypsin/alpha-amylase inhibitor CMX1/CMX3 from Triticum aestivum (Wheat).